Consider the following 28-residue polypeptide: Potassium channel toxin alpha-KTx 13.2 (28 aa).

3 disulfide bridges follow: cysteine 2-cysteine 19, cysteine 6-cysteine 24, and cysteine 10-cysteine 26. The tract at residues 17 to 24 (IKCINGSC) is interaction with Ca(2+)-activated K(+) channels.

Belongs to the short scorpion toxin superfamily. Potassium channel inhibitor family. Alpha-KTx 13 subfamily. As to expression, expressed by the venom gland.

The protein localises to the secreted. Its function is as follows. Potent and selective inhibitor of Kv1.2/KCNA2 potassium channels. The sequence is that of Potassium channel toxin alpha-KTx 13.2 from Orthochirus scrobiculosus (Central Asian scorpion).